The primary structure comprises 255 residues: Glucanase inhibitor protein 4 (255 aa).

A signal peptide spans 1–21; that stretch reads MKSITTASFALILFGVGAASA. In terms of domain architecture, Peptidase S1 spans 29–255; the sequence is VLGGGAVPSG…ESLGMDQLGH (227 aa). C56 and C72 are disulfide-bonded. N-linked (GlcNAc...) asparagine glycosylation is found at N90, N105, N110, and N160. 2 disulfides stabilise this stretch: C180-C192 and C202-C235.

Belongs to the peptidase S1 family. As to quaternary structure, forms an apoplastic complex with host endoglucanases in tomato leaves during P.infestans infection.

The protein localises to the secreted. Functionally, secreted effector that suppresses host plant glucan elicitor-mediated defense responses. Targets host endoglucanases and inhibits the endoglucanase-mediated release of elicitor-active glucan oligosaccharides from P.infestans cell walls. This Phytophthora infestans (Potato late blight agent) protein is Glucanase inhibitor protein 4.